We begin with the raw amino-acid sequence, 309 residues long: Homoserine kinase (309 aa).

Residue 95 to 105 (PQSRGLGSSAA) participates in ATP binding.

It belongs to the GHMP kinase family. Homoserine kinase subfamily.

It is found in the cytoplasm. It carries out the reaction L-homoserine + ATP = O-phospho-L-homoserine + ADP + H(+). Its pathway is amino-acid biosynthesis; L-threonine biosynthesis; L-threonine from L-aspartate: step 4/5. Functionally, catalyzes the ATP-dependent phosphorylation of L-homoserine to L-homoserine phosphate. This is Homoserine kinase from Corynebacterium glutamicum (strain R).